Reading from the N-terminus, the 37-residue chain is Large ribosomal subunit protein bL36c (37 aa).

It belongs to the bacterial ribosomal protein bL36 family.

The protein resides in the plastid. It localises to the chloroplast. This chain is Large ribosomal subunit protein bL36c, found in Phaeodactylum tricornutum (strain CCAP 1055/1).